The sequence spans 1108 residues: Mediator of RNA polymerase II transcription subunit 14 (1108 aa).

Disordered regions lie at residues 1 to 30 (MAAVMMNGVGPDGAMKPNLDQKLNNHGGDT), 35 to 54 (SSEIVQQQTPARSLQSDNPL), and 1048 to 1108 (QQQR…VDLT). Positions 35–52 (SSEIVQQQTPARSLQSDN) are enriched in polar residues. Positions 1048 to 1080 (QQQRQPVVQPGQQPQVQNQANGVMNRGPQRPGL) are enriched in low complexity.

Belongs to the Mediator complex subunit 14 family. As to quaternary structure, component of the Mediator complex.

Its subcellular location is the nucleus. Component of the Mediator complex, a coactivator involved in the regulated transcription of nearly all RNA polymerase II-dependent genes. Mediator functions as a bridge to convey information from gene-specific regulatory proteins to the basal RNA polymerase II transcription machinery. Mediator is recruited to promoters by direct interactions with regulatory proteins and serves as a scaffold for the assembly of a functional preinitiation complex with RNA polymerase II and the general transcription factors. This Pyricularia oryzae (strain 70-15 / ATCC MYA-4617 / FGSC 8958) (Rice blast fungus) protein is Mediator of RNA polymerase II transcription subunit 14 (RGR1).